Reading from the N-terminus, the 317-residue chain is UDP-3-O-acylglucosamine N-acyltransferase (317 aa).

Catalysis depends on histidine 229, which acts as the Proton acceptor.

The protein belongs to the transferase hexapeptide repeat family. LpxD subfamily. In terms of assembly, homotrimer.

The enzyme catalyses a UDP-3-O-[(3R)-3-hydroxyacyl]-alpha-D-glucosamine + a (3R)-hydroxyacyl-[ACP] = a UDP-2-N,3-O-bis[(3R)-3-hydroxyacyl]-alpha-D-glucosamine + holo-[ACP] + H(+). It functions in the pathway bacterial outer membrane biogenesis; LPS lipid A biosynthesis. Its function is as follows. Catalyzes the N-acylation of UDP-3-O-acylglucosamine using 3-hydroxyacyl-ACP as the acyl donor. Is involved in the biosynthesis of lipid A, a phosphorylated glycolipid that anchors the lipopolysaccharide to the outer membrane of the cell. The sequence is that of UDP-3-O-acylglucosamine N-acyltransferase from Campylobacter curvus (strain 525.92).